The chain runs to 20 residues: Calreticulin (20 aa).

It belongs to the calreticulin family. In terms of processing, glycosylated.

The protein resides in the endoplasmic reticulum lumen. Molecular calcium-binding chaperone promoting folding, oligomeric assembly and quality control in the ER via the calreticulin/calnexin cycle. This lectin may interact transiently with almost all of the monoglucosylated glycoproteins that are synthesized in the ER. The chain is Calreticulin from Spinacia oleracea (Spinach).